The sequence spans 105 residues: Nucleoid-associated protein OCAR_7544/OCA5_c05960 (105 aa).

Belongs to the YbaB/EbfC family. Homodimer.

It is found in the cytoplasm. The protein localises to the nucleoid. Its function is as follows. Binds to DNA and alters its conformation. May be involved in regulation of gene expression, nucleoid organization and DNA protection. This is Nucleoid-associated protein OCAR_7544/OCA5_c05960 from Afipia carboxidovorans (strain ATCC 49405 / DSM 1227 / KCTC 32145 / OM5) (Oligotropha carboxidovorans).